A 115-amino-acid chain; its full sequence is Cycloviolacin-O13 (115 aa).

The N-terminal stretch at 1–22 (MDAKKMFVALVLIATFALPSLA) is a signal peptide. Residues 23–81 (TFEKDFITPETIQAILKKSAPLSNIMLEEDVINALLKSKTVISNPIIEEAFLKNSNGLN) constitute a propeptide that is removed on maturation. The segment at residues 82-111 (GIPCGESCVWIPCISAAIGCSCKSKVCYRN) is a cross-link (cyclopeptide (Gly-Asn)). 3 disulfides stabilise this stretch: Cys85-Cys101, Cys89-Cys103, and Cys94-Cys108. Positions 112 to 115 (SLDN) are excised as a propeptide.

In terms of processing, cycloviolacin-O13 is a cyclic peptide. As to expression, expressed in leaves, petals, petioles, roots and runners (at protein level).

Functionally, probably participates in a plant defense mechanism. Has hemolytic activity. This Viola odorata (Sweet violet) protein is Cycloviolacin-O13.